A 26-amino-acid polypeptide reads, in one-letter code: ATP synthase subunit gamma, mitochondrial (26 aa).

The protein belongs to the ATPase gamma chain family. In terms of assembly, F-type ATPases have 2 components, CF(1) - the catalytic core - and CF(0) - the membrane proton channel. CF(1) has five subunits: alpha(3), beta(3), gamma(1), delta(1), epsilon(1). CF(0) has three main subunits: a, b and c.

It is found in the mitochondrion. The protein localises to the mitochondrion inner membrane. Functionally, mitochondrial membrane ATP synthase (F(1)F(0) ATP synthase or Complex V) produces ATP from ADP in the presence of a proton gradient across the membrane which is generated by electron transport complexes of the respiratory chain. F-type ATPases consist of two structural domains, F(1) - containing the extramembraneous catalytic core, and F(0) - containing the membrane proton channel, linked together by a central stalk and a peripheral stalk. During catalysis, ATP synthesis in the catalytic domain of F(1) is coupled via a rotary mechanism of the central stalk subunits to proton translocation. Part of the complex F(1) domain and the central stalk which is part of the complex rotary element. The gamma subunit protrudes into the catalytic domain formed of alpha(3)beta(3). Rotation of the central stalk against the surrounding alpha(3)beta(3) subunits leads to hydrolysis of ATP in three separate catalytic sites on the beta subunits. In Spinacia oleracea (Spinach), this protein is ATP synthase subunit gamma, mitochondrial (ATPC).